The sequence spans 220 residues: 7-cyano-7-deazaguanine synthase (220 aa).

F10–L20 is a binding site for ATP. Zn(2+)-binding residues include C186, C195, C198, and C201.

This sequence belongs to the QueC family. As to quaternary structure, homodimer. It depends on Zn(2+) as a cofactor.

It catalyses the reaction 7-carboxy-7-deazaguanine + NH4(+) + ATP = 7-cyano-7-deazaguanine + ADP + phosphate + H2O + H(+). The protein operates within purine metabolism; 7-cyano-7-deazaguanine biosynthesis. Functionally, catalyzes the ATP-dependent conversion of 7-carboxy-7-deazaguanine (CDG) to 7-cyano-7-deazaguanine (preQ(0)). In Bacillus mycoides (strain KBAB4) (Bacillus weihenstephanensis), this protein is 7-cyano-7-deazaguanine synthase.